A 60-amino-acid polypeptide reads, in one-letter code: Large ribosomal subunit protein bL32 (60 aa).

The segment covering 1 to 16 (MAVPRRKTSPSRRGMR) has biased composition (basic residues). A disordered region spans residues 1 to 60 (MAVPRRKTSPSRRGMRRSADAIKRPTYVEDKDSGELRRPHHLDLKTGMYKGRQVLKKKDS). Basic and acidic residues predominate over residues 17–44 (RSADAIKRPTYVEDKDSGELRRPHHLDL).

The polypeptide is Large ribosomal subunit protein bL32 (Rhodopseudomonas palustris (strain ATCC BAA-98 / CGA009)).